The sequence spans 155 residues: Ribosomal RNA large subunit methyltransferase H (155 aa).

S-adenosyl-L-methionine contacts are provided by residues Leu73, Gly104, and 123 to 128; that span reads LSPLTL.

Belongs to the RNA methyltransferase RlmH family. Homodimer.

It localises to the cytoplasm. The catalysed reaction is pseudouridine(1915) in 23S rRNA + S-adenosyl-L-methionine = N(3)-methylpseudouridine(1915) in 23S rRNA + S-adenosyl-L-homocysteine + H(+). Specifically methylates the pseudouridine at position 1915 (m3Psi1915) in 23S rRNA. This Pseudomonas fluorescens (strain ATCC BAA-477 / NRRL B-23932 / Pf-5) protein is Ribosomal RNA large subunit methyltransferase H.